Here is a 300-residue protein sequence, read N- to C-terminus: Ribosomal RNA small subunit methyltransferase H (300 aa).

S-adenosyl-L-methionine contacts are provided by residues 33–35, D52, F79, D100, and Q107; that span reads GGH.

It belongs to the methyltransferase superfamily. RsmH family.

The protein localises to the cytoplasm. It carries out the reaction cytidine(1402) in 16S rRNA + S-adenosyl-L-methionine = N(4)-methylcytidine(1402) in 16S rRNA + S-adenosyl-L-homocysteine + H(+). Its function is as follows. Specifically methylates the N4 position of cytidine in position 1402 (C1402) of 16S rRNA. The protein is Ribosomal RNA small subunit methyltransferase H of Mycoplasmopsis agalactiae (strain NCTC 10123 / CIP 59.7 / PG2) (Mycoplasma agalactiae).